Here is a 266-residue protein sequence, read N- to C-terminus: MIALALPAQDSGSFTPPGIDEMHLPAILPWGAHDGFSKQMLLVILSVVIIATFFILAARKQQLVPGKLQFAGEMAYGFVRNGIAKDIIGGKDFIKYVPLLFSLFFFILVNNIYGAIPVIQLPSFSHVGGAYVMAGIVYFTWIIIGIKKNGLKYFKLATVPSGVPWYILPIVVPIEIISNFLVRPVTHSLRLFATMLAGHLIVMLAGSGIEFLVMQENVLLKGASVLVLVGAVAMYMLEALIMALQAYVFTLLTAIYIEGALHADSH.

The next 6 membrane-spanning stretches (helical) occupy residues 38-58 (KQML…ILAA), 99-119 (LLFS…IPVI), 126-146 (HVGG…IIGI), 162-182 (GVPW…NFLV), 191-211 (LFAT…GIEF), and 224-244 (SVLV…IMAL).

It belongs to the ATPase A chain family. F-type ATPases have 2 components, CF(1) - the catalytic core - and CF(0) - the membrane proton channel. CF(1) has five subunits: alpha(3), beta(3), gamma(1), delta(1), epsilon(1). CF(0) has three main subunits: a(1), b(2) and c(9-12). The alpha and beta chains form an alternating ring which encloses part of the gamma chain. CF(1) is attached to CF(0) by a central stalk formed by the gamma and epsilon chains, while a peripheral stalk is formed by the delta and b chains.

The protein localises to the cell membrane. Its function is as follows. Key component of the proton channel; it plays a direct role in the translocation of protons across the membrane. The polypeptide is ATP synthase subunit a (Paenarthrobacter aurescens (strain TC1)).